The sequence spans 210 residues: Small ribosomal subunit protein uS7 (210 aa).

It belongs to the universal ribosomal protein uS7 family.

The polypeptide is Small ribosomal subunit protein uS7 (RPS5) (Podocoryna carnea (Hydrozoan)).